Consider the following 809-residue polypeptide: Leucine--tRNA ligase (809 aa).

The short motif at 40–50 is the 'HIGH' region element; the sequence is PYPSGRIHMGH. The 'KMSKS' region motif lies at 579–583; the sequence is KMSKS. K582 is a binding site for ATP.

This sequence belongs to the class-I aminoacyl-tRNA synthetase family.

Its subcellular location is the cytoplasm. It carries out the reaction tRNA(Leu) + L-leucine + ATP = L-leucyl-tRNA(Leu) + AMP + diphosphate. This Campylobacter jejuni subsp. doylei (strain ATCC BAA-1458 / RM4099 / 269.97) protein is Leucine--tRNA ligase.